Here is a 635-residue protein sequence, read N- to C-terminus: Threonine--tRNA ligase (635 aa).

The 61-residue stretch at 1 to 61 (MIAITLPDGS…DRDAELAIVT (61 aa)) folds into the TGS domain. The tract at residues 242–533 (DHRKLGKTLD…LLENHAGALP (292 aa)) is catalytic. Residues C333, H384, and H510 each contribute to the Zn(2+) site.

It belongs to the class-II aminoacyl-tRNA synthetase family. As to quaternary structure, homodimer. Zn(2+) is required as a cofactor.

The protein localises to the cytoplasm. The enzyme catalyses tRNA(Thr) + L-threonine + ATP = L-threonyl-tRNA(Thr) + AMP + diphosphate + H(+). Its function is as follows. Catalyzes the attachment of threonine to tRNA(Thr) in a two-step reaction: L-threonine is first activated by ATP to form Thr-AMP and then transferred to the acceptor end of tRNA(Thr). Also edits incorrectly charged L-seryl-tRNA(Thr). The chain is Threonine--tRNA ligase from Cupriavidus necator (strain ATCC 17699 / DSM 428 / KCTC 22496 / NCIMB 10442 / H16 / Stanier 337) (Ralstonia eutropha).